The following is a 204-amino-acid chain: MRILGIDPGLTRCGVGVVDVYADRSARLVDVQVVRTSPTAELHHRLLAVGDGIEELVDRHRPSVVAVERVFAQDNLSTVMGVAQITGVALVGAARRGLDVALHTPSEVKAAVTGYGQADKRQVATMVARILGLDELPTPADASDALALAICAGWRAGMSRAGIAGTQAPTRTGVASAADAAAGAGPTAAQAAWLAAERAQRGRR.

Residues aspartate 7, glutamate 68, and aspartate 141 contribute to the active site. Aspartate 7, glutamate 68, and aspartate 141 together coordinate Mg(2+).

The protein belongs to the RuvC family. As to quaternary structure, homodimer which binds Holliday junction (HJ) DNA. The HJ becomes 2-fold symmetrical on binding to RuvC with unstacked arms; it has a different conformation from HJ DNA in complex with RuvA. In the full resolvosome a probable DNA-RuvA(4)-RuvB(12)-RuvC(2) complex forms which resolves the HJ. Mg(2+) is required as a cofactor.

Its subcellular location is the cytoplasm. It catalyses the reaction Endonucleolytic cleavage at a junction such as a reciprocal single-stranded crossover between two homologous DNA duplexes (Holliday junction).. Functionally, the RuvA-RuvB-RuvC complex processes Holliday junction (HJ) DNA during genetic recombination and DNA repair. Endonuclease that resolves HJ intermediates. Cleaves cruciform DNA by making single-stranded nicks across the HJ at symmetrical positions within the homologous arms, yielding a 5'-phosphate and a 3'-hydroxyl group; requires a central core of homology in the junction. The consensus cleavage sequence is 5'-(A/T)TT(C/G)-3'. Cleavage occurs on the 3'-side of the TT dinucleotide at the point of strand exchange. HJ branch migration catalyzed by RuvA-RuvB allows RuvC to scan DNA until it finds its consensus sequence, where it cleaves and resolves the cruciform DNA. This Clavibacter sepedonicus (Clavibacter michiganensis subsp. sepedonicus) protein is Crossover junction endodeoxyribonuclease RuvC.